A 313-amino-acid polypeptide reads, in one-letter code: METANYTKVTEFVLTGLSQTPEVQLVLFVIFLSFYLFILPGNILIICTISLDPHLTSPMYFLLANLAFLDIWYSSITAPEMLIDFFVERKIISFDGCIAQLFFLHFAGASEMFLLTVMAFDLYTAICRPLHYATIMNQRLCCILVALSWRGGFIHSIIQVALIVRLPFCGPNELDSYFCDITQVVRIACANTFPEELVMICSSGLISVVCLIALLMSYAFLLALFKKLSGSGENTNRAMSTCYSHITIVVLMFGPSIYIYARPFDSFSLDKVVSVFNTLIFPLRNPIIYTLRNKEVKAAMRKLVTKYILCKEK.

The Extracellular segment spans residues 1–25 (METANYTKVTEFVLTGLSQTPEVQL). Residue asparagine 5 is glycosylated (N-linked (GlcNAc...) asparagine). The chain crosses the membrane as a helical span at residues 26-49 (VLFVIFLSFYLFILPGNILIICTI). Over 50-57 (SLDPHLTS) the chain is Cytoplasmic. Residues 58–79 (PMYFLLANLAFLDIWYSSITAP) form a helical membrane-spanning segment. At 80–100 (EMLIDFFVERKIISFDGCIAQ) the chain is on the extracellular side. A disulfide bridge links cysteine 97 with cysteine 189. Residues 101–120 (LFFLHFAGASEMFLLTVMAF) traverse the membrane as a helical segment. Residues 121–139 (DLYTAICRPLHYATIMNQR) lie on the Cytoplasmic side of the membrane. The chain crosses the membrane as a helical span at residues 140–158 (LCCILVALSWRGGFIHSII). Over 159–195 (QVALIVRLPFCGPNELDSYFCDITQVVRIACANTFPE) the chain is Extracellular. The chain crosses the membrane as a helical span at residues 196–219 (ELVMICSSGLISVVCLIALLMSYA). Residues 220–237 (FLLALFKKLSGSGENTNR) are Cytoplasmic-facing. The chain crosses the membrane as a helical span at residues 238–260 (AMSTCYSHITIVVLMFGPSIYIY). Topologically, residues 261-271 (ARPFDSFSLDK) are extracellular. Residues 272 to 291 (VVSVFNTLIFPLRNPIIYTL) traverse the membrane as a helical segment. Residues 292–313 (RNKEVKAAMRKLVTKYILCKEK) are Cytoplasmic-facing.

It belongs to the G-protein coupled receptor 1 family.

The protein resides in the cell membrane. In terms of biological role, odorant receptor. The polypeptide is Olfactory receptor 4M2 (OR4M2) (Homo sapiens (Human)).